A 247-amino-acid polypeptide reads, in one-letter code: Membrane-spanning 4-domains subfamily A member 6D (247 aa).

Residues 1-46 (MIPQVVTSETVTVISPNGISFPQTDKPQPSHQSQDSLKKHLKAEIK) are Cytoplasmic-facing. Residues 47–67 (VMAAIQIMCAVMVLSLGIILA) traverse the membrane as a helical segment. Topologically, residues 68–80 (SVPSNLHFTSVFS) are extracellular. A helical transmembrane segment spans residues 81 to 101 (ILLESGYPFVGALFFAISGIL). Residues 102-121 (SIVTEKKMTKPLVHSSLALS) lie on the Cytoplasmic side of the membrane. Residues 122-142 (ILSVLSALTGIAILSVSLAAL) form a helical membrane-spanning segment. Over 143–180 (EPALQQCKLAFTQLDTTQDAYHFFSPEPLNSCFVAKAA) the chain is Extracellular. The helical transmembrane segment at 181–201 (LTGVFSLMLISSVLELGLAVL) threads the bilayer. Over 202–247 (TATLWWKQSSSAFSGNVIFLSQNSKNKSSVSSESLCNPTYENILTS) the chain is Cytoplasmic. At S235 the chain carries Phosphoserine.

It belongs to the MS4A family. As to expression, expressed in thymus, spleen, intestine, colon, testis, heart, liver, brain, kidney, peripheral lymph node and bone marrow.

The protein resides in the membrane. In terms of biological role, may be involved in signal transduction as a component of a multimeric receptor complex. The sequence is that of Membrane-spanning 4-domains subfamily A member 6D (Ms4a6d) from Mus musculus (Mouse).